The chain runs to 203 residues: Imidazoleglycerol-phosphate dehydratase (203 aa).

It belongs to the imidazoleglycerol-phosphate dehydratase family.

It is found in the cytoplasm. The enzyme catalyses D-erythro-1-(imidazol-4-yl)glycerol 3-phosphate = 3-(imidazol-4-yl)-2-oxopropyl phosphate + H2O. It participates in amino-acid biosynthesis; L-histidine biosynthesis; L-histidine from 5-phospho-alpha-D-ribose 1-diphosphate: step 6/9. The sequence is that of Imidazoleglycerol-phosphate dehydratase from Synechococcus sp. (strain RCC307).